The sequence spans 173 residues: Photosystem I assembly protein Ycf3 (173 aa).

TPR repeat units lie at residues 35–68 (AFVY…EDDA), 72–105 (SYIL…NPNL), and 120–153 (GERA…APNN).

The protein belongs to the Ycf3 family.

It localises to the cellular thylakoid membrane. Its function is as follows. Essential for the assembly of the photosystem I (PSI) complex. May act as a chaperone-like factor to guide the assembly of the PSI subunits. This is Photosystem I assembly protein Ycf3 from Gloeothece citriformis (strain PCC 7424) (Cyanothece sp. (strain PCC 7424)).